The sequence spans 365 residues: Histidine biosynthesis bifunctional protein HisB (365 aa).

Residues 1-176 are histidinol-phosphatase; sequence MTQQPTLFID…VADPKGLGQP (176 aa). Aspartate 10 serves as the catalytic Nucleophile. Residues aspartate 10 and aspartate 12 each contribute to the Mg(2+) site. Residue aspartate 12 is the Proton donor of the active site. Zn(2+)-binding residues include cysteine 93, histidine 95, cysteine 101, and cysteine 103. Residue aspartate 130 participates in Mg(2+) binding. The imidazoleglycerol-phosphate dehydratase stretch occupies residues 177–365; the sequence is RHAVVARKTK…NEMPSSKGVL (189 aa).

The protein in the N-terminal section; belongs to the histidinol-phosphatase family. This sequence in the C-terminal section; belongs to the imidazoleglycerol-phosphate dehydratase family. It depends on Mg(2+) as a cofactor. The cofactor is Zn(2+).

It localises to the cytoplasm. The enzyme catalyses D-erythro-1-(imidazol-4-yl)glycerol 3-phosphate = 3-(imidazol-4-yl)-2-oxopropyl phosphate + H2O. The catalysed reaction is L-histidinol phosphate + H2O = L-histidinol + phosphate. It participates in amino-acid biosynthesis; L-histidine biosynthesis; L-histidine from 5-phospho-alpha-D-ribose 1-diphosphate: step 6/9. The protein operates within amino-acid biosynthesis; L-histidine biosynthesis; L-histidine from 5-phospho-alpha-D-ribose 1-diphosphate: step 8/9. In Mannheimia succiniciproducens (strain KCTC 0769BP / MBEL55E), this protein is Histidine biosynthesis bifunctional protein HisB.